A 326-amino-acid chain; its full sequence is uncharacterized protein (326 aa).

2 consecutive transmembrane segments (helical) span residues 9-29 (WVVL…RWSL) and 33-53 (ISIC…ANSY). Positions 120, 148, 214, 218, and 252 each coordinate NADP(+). Catalysis depends on Tyr214, which acts as the Proton acceptor. Catalysis depends on Lys218, which acts as the Lowers pKa of active site Tyr.

This sequence belongs to the short-chain dehydrogenases/reductases (SDR) family.

It is found in the mitochondrion membrane. Its function is as follows. Involved in the resistance to DNA-damaging agents. This is an uncharacterized protein from Saccharomyces cerevisiae (strain ATCC 204508 / S288c) (Baker's yeast).